We begin with the raw amino-acid sequence, 82 residues long: ATP synthase subunit c, chloroplastic (82 aa).

The next 2 membrane-spanning stretches (helical) occupy residues 3–23 (PLISAASVLAAGLAVGLASIG) and 57–77 (FAFMESLTIYGLVVALALLFA).

It belongs to the ATPase C chain family. In terms of assembly, F-type ATPases have 2 components, F(1) - the catalytic core - and F(0) - the membrane proton channel. F(1) has five subunits: alpha(3), beta(3), gamma(1), delta(1), epsilon(1). F(0) has four main subunits: a(1), b(1), b'(1) and c(10-14). The alpha and beta chains form an alternating ring which encloses part of the gamma chain. F(1) is attached to F(0) by a central stalk formed by the gamma and epsilon chains, while a peripheral stalk is formed by the delta, b and b' chains.

The protein resides in the plastid. The protein localises to the chloroplast thylakoid membrane. Its function is as follows. F(1)F(0) ATP synthase produces ATP from ADP in the presence of a proton or sodium gradient. F-type ATPases consist of two structural domains, F(1) containing the extramembraneous catalytic core and F(0) containing the membrane proton channel, linked together by a central stalk and a peripheral stalk. During catalysis, ATP synthesis in the catalytic domain of F(1) is coupled via a rotary mechanism of the central stalk subunits to proton translocation. Functionally, key component of the F(0) channel; it plays a direct role in translocation across the membrane. A homomeric c-ring of between 10-14 subunits forms the central stalk rotor element with the F(1) delta and epsilon subunits. The polypeptide is ATP synthase subunit c, chloroplastic (Mesostigma viride (Green alga)).